A 307-amino-acid chain; its full sequence is Elongation factor Ts (307 aa).

Positions 80 to 83 are involved in Mg(2+) ion dislocation from EF-Tu; the sequence is TDFV.

The protein belongs to the EF-Ts family.

It is found in the cytoplasm. Its function is as follows. Associates with the EF-Tu.GDP complex and induces the exchange of GDP to GTP. It remains bound to the aminoacyl-tRNA.EF-Tu.GTP complex up to the GTP hydrolysis stage on the ribosome. The chain is Elongation factor Ts from Bradyrhizobium sp. (strain ORS 278).